The following is a 516-amino-acid chain: Putative thymidine phosphorylase (516 aa).

It belongs to the thymidine/pyrimidine-nucleoside phosphorylase family. Type 2 subfamily.

It carries out the reaction thymidine + phosphate = 2-deoxy-alpha-D-ribose 1-phosphate + thymine. In Methylococcus capsulatus (strain ATCC 33009 / NCIMB 11132 / Bath), this protein is Putative thymidine phosphorylase.